Consider the following 129-residue polypeptide: Flagellar assembly factor FliW 2 (129 aa).

The protein belongs to the FliW family. Interacts with translational regulator CsrA and flagellin(s).

Its subcellular location is the cytoplasm. Acts as an anti-CsrA protein, binds CsrA and prevents it from repressing translation of its target genes, one of which is flagellin. Binds to flagellin and participates in the assembly of the flagellum. The chain is Flagellar assembly factor FliW 2 from Helicobacter pylori (strain J99 / ATCC 700824) (Campylobacter pylori J99).